We begin with the raw amino-acid sequence, 207 residues long: Alpha-1-acid glycoprotein 8 (207 aa).

Positions 1-18 are cleaved as a signal peptide; sequence MALHTVLIMLSLLPMLEA. N-linked (GlcNAc...) asparagine glycosylation is found at Asn-25, Asn-34, Asn-76, Asn-94, and Asn-104. Residues Cys-91 and Cys-184 are joined by a disulfide bond.

The protein belongs to the calycin superfamily. Lipocalin family. In terms of tissue distribution, expressed by the liver and secreted in plasma.

It is found in the secreted. Functionally, functions as a transport protein in the blood stream. Binds various ligands in the interior of its beta-barrel domain. Appears to function in modulating the activity of the immune system during the acute-phase reaction. The protein is Alpha-1-acid glycoprotein 8 (Orm8) of Mus caroli (Ryukyu mouse).